A 296-amino-acid polypeptide reads, in one-letter code: Light-independent protochlorophyllide reductase iron-sulfur ATP-binding protein (296 aa).

Residues 39–44 and lysine 68 each bind ATP; that span reads GIGKST. Mg(2+) is bound at residue serine 43. Positions 124 and 158 each coordinate [4Fe-4S] cluster. An ATP-binding site is contributed by 209-210; the sequence is NR.

Belongs to the NifH/BchL/ChlL family. In terms of assembly, homodimer. Protochlorophyllide reductase is composed of three subunits; ChlL, ChlN and ChlB. It depends on [4Fe-4S] cluster as a cofactor.

The enzyme catalyses chlorophyllide a + oxidized 2[4Fe-4S]-[ferredoxin] + 2 ADP + 2 phosphate = protochlorophyllide a + reduced 2[4Fe-4S]-[ferredoxin] + 2 ATP + 2 H2O. It participates in porphyrin-containing compound metabolism; chlorophyll biosynthesis (light-independent). Functionally, component of the dark-operative protochlorophyllide reductase (DPOR) that uses Mg-ATP and reduced ferredoxin to reduce ring D of protochlorophyllide (Pchlide) to form chlorophyllide a (Chlide). This reaction is light-independent. The L component serves as a unique electron donor to the NB-component of the complex, and binds Mg-ATP. The protein is Light-independent protochlorophyllide reductase iron-sulfur ATP-binding protein of Prochlorococcus marinus (strain SARG / CCMP1375 / SS120).